The primary structure comprises 431 residues: Glutamate--tRNA ligase 1 (431 aa).

The 'HIGH' region signature appears at 11–21; that stretch reads PSPTGDLHLGG. A 'KMSKS' region motif is present at residues 203–207; it reads KLSKR. Lys206 is an ATP binding site.

It belongs to the class-I aminoacyl-tRNA synthetase family. Glutamate--tRNA ligase type 1 subfamily. As to quaternary structure, monomer.

The protein localises to the cytoplasm. It catalyses the reaction tRNA(Glu) + L-glutamate + ATP = L-glutamyl-tRNA(Glu) + AMP + diphosphate. Its function is as follows. Catalyzes the attachment of glutamate to tRNA(Glu) in a two-step reaction: glutamate is first activated by ATP to form Glu-AMP and then transferred to the acceptor end of tRNA(Glu). The sequence is that of Glutamate--tRNA ligase 1 from Rubrobacter xylanophilus (strain DSM 9941 / JCM 11954 / NBRC 16129 / PRD-1).